Consider the following 165-residue polypeptide: LOB domain-containing protein 21 (165 aa).

The LOB domain occupies 10–111 (SSCAACKLLK…HDLAVARTRL (102 aa)).

Belongs to the LOB domain-containing protein family.

In Arabidopsis thaliana (Mouse-ear cress), this protein is LOB domain-containing protein 21 (LBD21).